We begin with the raw amino-acid sequence, 66 residues long: Sec-independent protein translocase protein TatA (66 aa).

A helical membrane pass occupies residues 1–21 (MIGGLGMPELIIILVIILIIF). The segment at 45–66 (RDAELNEGDKDDKEKEQEKLDK) is disordered.

The protein belongs to the TatA/E family. As to quaternary structure, the Tat system comprises two distinct complexes: a TatABC complex, containing multiple copies of TatA, TatB and TatC subunits, and a separate TatA complex, containing only TatA subunits. Substrates initially bind to the TatABC complex, which probably triggers association of the separate TatA complex to form the active translocon.

Its subcellular location is the cell inner membrane. In terms of biological role, part of the twin-arginine translocation (Tat) system that transports large folded proteins containing a characteristic twin-arginine motif in their signal peptide across membranes. TatA could form the protein-conducting channel of the Tat system. The polypeptide is Sec-independent protein translocase protein TatA (Desulforapulum autotrophicum (strain ATCC 43914 / DSM 3382 / VKM B-1955 / HRM2) (Desulfobacterium autotrophicum)).